Here is a 484-residue protein sequence, read N- to C-terminus: Putative amidase AmiA2 (484 aa).

Active-site charge relay system residues include lysine 93 and serine 167. The active-site Acyl-ester intermediate is the serine 191.

Belongs to the amidase family.

The catalysed reaction is a monocarboxylic acid amide + H2O = a monocarboxylate + NH4(+). The chain is Putative amidase AmiA2 (amiA2) from Mycobacterium bovis (strain ATCC BAA-935 / AF2122/97).